Reading from the N-terminus, the 94-residue chain is PqqA binding protein (94 aa).

It belongs to the PqqD family. As to quaternary structure, monomer. Interacts with PqqE.

It participates in cofactor biosynthesis; pyrroloquinoline quinone biosynthesis. Functions as a PqqA binding protein and presents PqqA to PqqE, in the pyrroloquinoline quinone (PQQ) biosynthetic pathway. The chain is PqqA binding protein from Acinetobacter baumannii (strain SDF).